A 484-amino-acid chain; its full sequence is ATP synthase subunit beta (484 aa).

The tract at residues 104 to 123 (ERGPIGSKQTMPIHADAPPF) is disordered. Residue 156–163 (GGAGVGKT) coordinates ATP.

Belongs to the ATPase alpha/beta chains family. F-type ATPases have 2 components, CF(1) - the catalytic core - and CF(0) - the membrane proton channel. CF(1) has five subunits: alpha(3), beta(3), gamma(1), delta(1), epsilon(1). CF(0) has three main subunits: a(1), b(2) and c(9-12). The alpha and beta chains form an alternating ring which encloses part of the gamma chain. CF(1) is attached to CF(0) by a central stalk formed by the gamma and epsilon chains, while a peripheral stalk is formed by the delta and b chains.

It localises to the cell inner membrane. It carries out the reaction ATP + H2O + 4 H(+)(in) = ADP + phosphate + 5 H(+)(out). Produces ATP from ADP in the presence of a proton gradient across the membrane. The catalytic sites are hosted primarily by the beta subunits. The polypeptide is ATP synthase subunit beta (Zymomonas mobilis subsp. mobilis (strain ATCC 31821 / ZM4 / CP4)).